A 1027-amino-acid chain; its full sequence is Exportin-T (1027 aa).

Belongs to the exportin family.

It is found in the nucleus. The protein resides in the cytoplasm. Functionally, tRNA nucleus export receptor which facilitates tRNA translocation across the nuclear pore complex. Involved in pre-tRNA splicing, probably by affecting the interaction of pre-tRNA with splicing endonuclease. This Pyricularia oryzae (strain 70-15 / ATCC MYA-4617 / FGSC 8958) (Rice blast fungus) protein is Exportin-T (LOS1).